The sequence spans 350 residues: Ion-translocating oxidoreductase complex subunit D (350 aa).

3 helical membrane passes run 36–56 (CYFF…IAVA), 89–109 (IPAL…ILVV), and 124–144 (AMAA…TWVA). An FMN phosphoryl threonine modification is found at T185. The next 5 helical transmembrane spans lie at 212-232 (GFGI…LVML), 239-259 (WQIS…GYLL), 265-285 (MGPL…FIAT), 298-318 (LIFG…CGYP), and 319-339 (DAFA…DYYV).

Belongs to the NqrB/RnfD family. As to quaternary structure, the complex is composed of six subunits: RnfA, RnfB, RnfC, RnfD, RnfE and RnfG. FMN serves as cofactor.

It is found in the cell inner membrane. In terms of biological role, part of a membrane-bound complex that couples electron transfer with translocation of ions across the membrane. In Shewanella loihica (strain ATCC BAA-1088 / PV-4), this protein is Ion-translocating oxidoreductase complex subunit D.